Here is a 427-residue protein sequence, read N- to C-terminus: Succinate--CoA ligase [ADP-forming] subunit beta, mitochondrial (427 aa).

The N-terminal 30 residues, 1-30, are a transit peptide targeting the mitochondrion; it reads MYSRKSLSLISKCGQLSRLNAQAALQARRH. An ATP-grasp domain is found at 39-284; it reads AQLLREYGIG…LSQEDPDEVK (246 aa). Residues Lys76 and 83–85 contribute to the ATP site; that span reads GRG. Residue Ser102 is modified to Phosphoserine. Glu144 is a binding site for ATP. Residues Asn236 and Asp253 each contribute to the Mg(2+) site. 2 positions are modified to phosphoserine: Ser263 and Ser276. Substrate contacts are provided by residues Asn304 and 361 to 363; that span reads GIV.

It belongs to the succinate/malate CoA ligase beta subunit family. In terms of assembly, heterodimer of an alpha and a beta subunit. The cofactor is Mg(2+).

Its subcellular location is the mitochondrion. It carries out the reaction succinate + ATP + CoA = succinyl-CoA + ADP + phosphate. It participates in carbohydrate metabolism; tricarboxylic acid cycle; succinate from succinyl-CoA (ligase route): step 1/1. Its function is as follows. Succinyl-CoA synthetase functions in the citric acid cycle (TCA), coupling the hydrolysis of succinyl-CoA to the synthesis of ATP and thus represents the only step of substrate-level phosphorylation in the TCA. The beta subunit provides nucleotide specificity of the enzyme and binds the substrate succinate, while the binding sites for coenzyme A and phosphate are found in the alpha subunit. This chain is Succinate--CoA ligase [ADP-forming] subunit beta, mitochondrial, found in Saccharomyces cerevisiae (strain ATCC 204508 / S288c) (Baker's yeast).